The sequence spans 133 residues: Putative biopolymer transport protein ExbD-like 1 (133 aa).

At 1 to 15 the chain is on the cytoplasmic side; it reads MNYDNYWDEDKPELN. A helical transmembrane segment spans residues 16 to 32; that stretch reads ITPLVDVMLVLLAILMV. Residues 33-133 lie on the Periplasmic side of the membrane; that stretch reads TTPTLTYKEE…FLKVSLITSP (101 aa).

It belongs to the ExbD/TolR family.

It is found in the cell inner membrane. The chain is Putative biopolymer transport protein ExbD-like 1 from Helicobacter pylori (strain ATCC 700392 / 26695) (Campylobacter pylori).